A 709-amino-acid chain; its full sequence is MAQAHIRGSPCPLLPPGRMSWPHGALLLLWLFSPPLRAGGGGVAVTSAAGGGSPPATSCPAACSCSNQASRVICTRRELAEVPASIPVNTRYLNLQENSIQVIRTDTFKHLRHLEILQLSKNLVRKIEVGAFNGLPSLNTLELFDNRLTTVPTQAFEYLSKLRELWLRNNPIESIPSYAFNRVPSLRRLDLGELKRLEYISEAAFEGLVNLRYLNLGMCNLKDIPNLTALVRLEELELSGNRLDLIRPGSFQGLTSLRKLWLMHAQVATIERNAFDDLKSLEELNLSHNNLMSLPHDLFTPLHRLERVHLNHNPWHCNCDVLWLSWWLKETVPSNTTCCARCHAPAGLKGRYIGELDQSHFTCYAPVIVEPPTDLNVTEGMAAELKCRTGTSMTSVNWLTPNGTLMTHGSYRVRISVLHDGTLNFTNVTVQDTGQYTCMVTNSAGNTTASATLNVSAVDPVAAGGPGGGGPGGGGGAGGAGGYTYFTTVTVETLETQPGEEAQQPRGTEKEPPGPTTDGAWGGGRPDAAAPASASTTAPAPRSSRPTEKAFTVPITDVTENALKDLDDVMKTTKIIIGCFVAITFMAAVMLVAFYKLRKQHQLHKHHGPTRTVEIINVEDELPAASAVSVAAAAAVAGGAGVGGDSHLALPALERDHLNHHHYVAAAFKAHYGGNPGGGCGAKGPGLNSIHEPLLFKSGSKENVQETQI.

Positions 1 to 38 are cleaved as a signal peptide; the sequence is MAQAHIRGSPCPLLPPGRMSWPHGALLLLWLFSPPLRA. The LRRNT domain maps to 50–88; sequence GGGSPPATSCPAACSCSNQASRVICTRRELAEVPASIPV. LRR repeat units follow at residues 89–110, 113–134, 137–158, 161–182, 185–207, 210–231, 232–253, 256–277, and 280–301; these read NTRYLNLQENSIQVIRTDTFKH, HLEILQLSKNLVRKIEVGAFNG, SLNTLELFDNRLTTVPTQAFEY, KLRELWLRNNPIESIPSYAFNR, SLRRLDLGELKRLEYISEAAFEG, NLRYLNLGMCNLKDIPNLTALV, RLEELELSGNRLDLIRPGSFQG, SLRKLWLMHAQVATIERNAFDD, and SLEELNLSHNNLMSLPHDLFTP. Residue asparagine 226 is glycosylated (N-linked (GlcNAc...) asparagine). Asparagine 285, asparagine 335, asparagine 376, asparagine 402, asparagine 424, asparagine 427, asparagine 446, and asparagine 454 each carry an N-linked (GlcNAc...) asparagine glycan. Positions 313-365 constitute an LRRCT domain; that stretch reads NPWHCNCDVLWLSWWLKETVPSNTTCCARCHAPAGLKGRYIGELDQSHFTCYA. One can recognise an Ig-like C2-type domain in the interval 366–454; sequence PVIVEPPTDL…GNTTASATLN (89 aa). A disulfide bridge connects residues cysteine 387 and cysteine 438. A disordered region spans residues 496–552; it reads TQPGEEAQQPRGTEKEPPGPTTDGAWGGGRPDAAAPASASTTAPAPRSSRPTEKAFT. The span at 528–544 shows a compositional bias: low complexity; the sequence is AAAPASASTTAPAPRSS. The chain crosses the membrane as a helical span at residues 575–595; that stretch reads IIIGCFVAITFMAAVMLVAFY. Serine 689 carries the post-translational modification Phosphoserine.

In terms of assembly, interacts with PTPRF. Interacts with DLG4. N-glycosylated. O-glycosylated; contains sialic acid.

It localises to the membrane. It is found in the presynaptic cell membrane. Synaptic adhesion protein. Regulates the formation of excitatory synapses. The trans-synaptic adhesion between LRRC4B and PTPRF regulates the formation of excitatory synapses in a bidirectional manner. This Mus musculus (Mouse) protein is Leucine-rich repeat-containing protein 4B (Lrrc4b).